A 107-amino-acid chain; its full sequence is Diuretic hormone 45 (107 aa).

Residues 1 to 44 constitute a propeptide that is removed on maturation; it reads LYAMSPMAARYSAGAPWLYLLADMPRDSQRLVDPADLHEGRARP. Valine amide is present on Val-91.

As to expression, expressed in corpora cardiaca (CC), corpora allata (CA), antennal lobe (AL) and gnathal ganglion (GNG) (at protein level). Expression in AL and GNG detected in some animals, in CC and CA in few animals (at protein level).

It is found in the secreted. Its function is as follows. Regulation of fluid secretion. In Agrotis ipsilon (Black cutworm moth), this protein is Diuretic hormone 45.